We begin with the raw amino-acid sequence, 473 residues long: 3-isopropylmalate dehydratase large subunit (473 aa).

Positions 348, 408, and 411 each coordinate [4Fe-4S] cluster.

It belongs to the aconitase/IPM isomerase family. LeuC type 1 subfamily. In terms of assembly, heterodimer of LeuC and LeuD. It depends on [4Fe-4S] cluster as a cofactor.

It carries out the reaction (2R,3S)-3-isopropylmalate = (2S)-2-isopropylmalate. It functions in the pathway amino-acid biosynthesis; L-leucine biosynthesis; L-leucine from 3-methyl-2-oxobutanoate: step 2/4. Functionally, catalyzes the isomerization between 2-isopropylmalate and 3-isopropylmalate, via the formation of 2-isopropylmaleate. In Haloarcula marismortui (strain ATCC 43049 / DSM 3752 / JCM 8966 / VKM B-1809) (Halobacterium marismortui), this protein is 3-isopropylmalate dehydratase large subunit.